We begin with the raw amino-acid sequence, 434 residues long: Ribulose bisphosphate carboxylase-like protein (434 aa).

Lysine 198, aspartate 200, and glutamate 201 together coordinate Mg(2+). Lysine 198 carries the post-translational modification N6-carboxylysine.

It belongs to the RuBisCO large chain family. Type IV subfamily. In terms of assembly, homodimer. Mg(2+) is required as a cofactor.

Its function is as follows. May be involved in sulfur metabolism and oxidative stress response. Does not show RuBisCO activity. This is Ribulose bisphosphate carboxylase-like protein from Chlorobaculum thiosulfatiphilum (Chlorobium limicola f.sp. thiosulfatophilum).